An 879-amino-acid polypeptide reads, in one-letter code: Translation initiation factor IF-2 (879 aa).

Disordered stretches follow at residues 45 to 216 (AGHM…ERKR) and 228 to 293 (SYEE…EKPV). Composition is skewed to basic and acidic residues over residues 60–72 (NAAK…DKNS), 83–99 (RKTD…KISP), and 107–163 (AEKK…ERLQ). The span at 164-173 (MEAALQAQMQ) shows a compositional bias: low complexity. 3 stretches are compositionally biased toward basic and acidic residues: residues 174 to 216 (EQER…ERKR), 228 to 271 (SYEE…ERRN), and 280 to 291 (RNNDNKKGKFEK). Residues 380 to 549 (VRAPVVTIMG…LIQAEMLELT (170 aa)) form the tr-type G domain. Positions 389-396 (GHVDHGKT) are G1. 389-396 (GHVDHGKT) is a GTP binding site. The G2 stretch occupies residues 414–418 (GITQH). The segment at 435-438 (DTPG) is G3. Residues 435 to 439 (DTPGH) and 489 to 492 (NKMD) each bind GTP. The tract at residues 489-492 (NKMD) is G4. Residues 525–527 (SAK) form a G5 region.

Belongs to the TRAFAC class translation factor GTPase superfamily. Classic translation factor GTPase family. IF-2 subfamily.

It is found in the cytoplasm. In terms of biological role, one of the essential components for the initiation of protein synthesis. Protects formylmethionyl-tRNA from spontaneous hydrolysis and promotes its binding to the 30S ribosomal subunits. Also involved in the hydrolysis of GTP during the formation of the 70S ribosomal complex. The protein is Translation initiation factor IF-2 of Dichelobacter nodosus (strain VCS1703A).